The following is a 137-amino-acid chain: Large ribosomal subunit protein uL16 (137 aa).

The protein belongs to the universal ribosomal protein uL16 family. In terms of assembly, part of the 50S ribosomal subunit.

Functionally, binds 23S rRNA and is also seen to make contacts with the A and possibly P site tRNAs. The sequence is that of Large ribosomal subunit protein uL16 from Mycoplasma mycoides subsp. mycoides SC (strain CCUG 32753 / NCTC 10114 / PG1).